Reading from the N-terminus, the 354-residue chain is MEQNVFFLPHEGLKLAELAEFLGAELANSDHSDVIVRSVAPISRARAGDVCYILSRRNREEFATCEASAVICDKALADVVPPHLPVILSSNPHAAFAMAGGLFYPAALRPVAISGESEIAPSAVIDPSAKLEKGVIVEPLAVIGPHAEIGEGTRIGANSVIGPDVKIGRDCSIAAGASILCALIGNGVVIHNGVRIGQDGFGYAPGPRGMIKIVQIGRVIIQDNVEIGANTTIDRGAMDDTVIGEGTKIDNQVQIGHNVQIGRHCAIVSQVGIAGSTKIGNGVQIGGQVGIKGHVTIGDGVQIAAKSGIMTDLAAGGQYGGIPARPLKDYLREAAQQVSKSKLRGRNPGGKQND.

Catalysis depends on H257, which acts as the Proton acceptor. The tract at residues A335 to D354 is disordered.

Belongs to the transferase hexapeptide repeat family. LpxD subfamily. In terms of assembly, homotrimer.

It carries out the reaction a UDP-3-O-[(3R)-3-hydroxyacyl]-alpha-D-glucosamine + a (3R)-hydroxyacyl-[ACP] = a UDP-2-N,3-O-bis[(3R)-3-hydroxyacyl]-alpha-D-glucosamine + holo-[ACP] + H(+). It functions in the pathway bacterial outer membrane biogenesis; LPS lipid A biosynthesis. Catalyzes the N-acylation of UDP-3-O-acylglucosamine using 3-hydroxyacyl-ACP as the acyl donor. Is involved in the biosynthesis of lipid A, a phosphorylated glycolipid that anchors the lipopolysaccharide to the outer membrane of the cell. This is UDP-3-O-acylglucosamine N-acyltransferase from Rhizobium etli (strain ATCC 51251 / DSM 11541 / JCM 21823 / NBRC 15573 / CFN 42).